The chain runs to 202 residues: Protein SYM1 (202 aa).

Transmembrane regions (helical) follow at residues 15–31 (MAVT…DCVS), 48–66 (AGIY…FRFL), 82–99 (AVFA…MGLL), and 143–159 (VLAS…FLAY).

This sequence belongs to the peroxisomal membrane protein PXMP2/4 family.

It is found in the mitochondrion inner membrane. In terms of biological role, may be involved in cellular response to stress. Required to maintain mitochondrial DNA (mtDNA) integrity and stability. The polypeptide is Protein SYM1 (SYM1) (Yarrowia lipolytica (strain CLIB 122 / E 150) (Yeast)).